The sequence spans 573 residues: Putative cytochrome c oxidase subunit 1-beta (573 aa).

A helical membrane pass occupies residues 53 to 73 (VIGHLYLATSFGFFLLGGVLA). His100 serves as a coordination point for Fe(II)-heme a. The next 6 helical transmembrane spans lie at 103–123 (IMMLLFATPLFAGFTNVIMPL), 141–161 (WMYLFGGLMVVSGFLTPGGAA), 188–208 (GLVVSGVSTTLSAVNFISTII), 227–247 (ILFTSILVLPAFPVLTAALLM), 272–292 (LFWFFGHPEVYIVALPFFGIV), and 304–324 (IFGYVSLVGATIAITFLSAVV). The Cu cation site is built by His278 and Tyr282. The 1'-histidyl-3'-tyrosine (His-Tyr) cross-link spans 278 to 282 (HPEVY). 2 residues coordinate Cu cation: His327 and His328. A run of 2 helical transmembrane segments spans residues 329–349 (MFATGAVLLPFFSLMSFLIAV) and 373–393 (MLWACGFLVTFLLGGMSGVLI). Residue His411 coordinates heme a3. Helical transmembrane passes span 412-432 (LHYVLFGTVVFAMFAGFYFWW), 447-467 (IHFWTLFVGFQTTFLVQHWLG), and 490-510 (ISSIGAFLLGLSTLPFLYNVW). His413 provides a ligand contact to Fe(II)-heme a.

It belongs to the heme-copper respiratory oxidase family. As to quaternary structure, associates with subunits II, III and IV to form cytochrome c oxidase. Requires Cu(2+) as cofactor. The cofactor is heme.

The protein localises to the cell membrane. It catalyses the reaction 4 Fe(II)-[cytochrome c] + O2 + 8 H(+)(in) = 4 Fe(III)-[cytochrome c] + 2 H2O + 4 H(+)(out). It participates in energy metabolism; oxidative phosphorylation. Its function is as follows. Cytochrome c oxidase is the component of the respiratory chain that catalyzes the reduction of oxygen to water. Subunits 1-3 form the functional core of the enzyme complex. CO I is the catalytic subunit of the enzyme. Electrons originating in cytochrome c are transferred via the copper A center of subunit 2 and heme A of subunit 1 to the bimetallic center formed by heme A3 and copper B. The chain is Putative cytochrome c oxidase subunit 1-beta (ctaD2) from Streptomyces coelicolor (strain ATCC BAA-471 / A3(2) / M145).